A 395-amino-acid polypeptide reads, in one-letter code: 1-deoxy-D-xylulose 5-phosphate reductoisomerase (395 aa).

NADPH is bound by residues Thr10, Gly11, Ser12, Ile13, Ala36, and Asn123. Residue Lys124 participates in 1-deoxy-D-xylulose 5-phosphate binding. Glu125 is an NADPH binding site. Asp149 is a binding site for Mn(2+). The 1-deoxy-D-xylulose 5-phosphate site is built by Ser150, Glu151, Ser185, and His208. Position 151 (Glu151) interacts with Mn(2+). Gly214 contacts NADPH. Residues Ser221, Asn226, Lys227, and Glu230 each contribute to the 1-deoxy-D-xylulose 5-phosphate site. Glu230 is a binding site for Mn(2+).

This sequence belongs to the DXR family. The cofactor is Mg(2+). Mn(2+) serves as cofactor.

The enzyme catalyses 2-C-methyl-D-erythritol 4-phosphate + NADP(+) = 1-deoxy-D-xylulose 5-phosphate + NADPH + H(+). It participates in isoprenoid biosynthesis; isopentenyl diphosphate biosynthesis via DXP pathway; isopentenyl diphosphate from 1-deoxy-D-xylulose 5-phosphate: step 1/6. In terms of biological role, catalyzes the NADPH-dependent rearrangement and reduction of 1-deoxy-D-xylulose-5-phosphate (DXP) to 2-C-methyl-D-erythritol 4-phosphate (MEP). The polypeptide is 1-deoxy-D-xylulose 5-phosphate reductoisomerase (Shewanella amazonensis (strain ATCC BAA-1098 / SB2B)).